The sequence spans 199 residues: Interferon kappa (199 aa).

The first 21 residues, Met1–Ser21, serve as a signal peptide directing secretion. 2 cysteine pairs are disulfide-bonded: Cys24–Cys119 and Cys49–Cys162.

Belongs to the alpha/beta interferon family. As to expression, expressed at low levels in peritoneal macrophages.

Its subcellular location is the secreted. May play a role in the regulation of immune cell function. The chain is Interferon kappa (Ifnk) from Mus musculus (Mouse).